A 150-amino-acid polypeptide reads, in one-letter code: Probable cyclase FGR4 (150 aa).

The protein operates within secondary metabolite biosynthesis. Its function is as follows. Probable cyclase; part of the gene cluster that mediates the biosynthesis of the tetraketides fugralins such as linear fugralin A and cyclic fugralin B, volatile compounds that play a role in the asexual reproductive cycle but are not involved in pathogenicity. Fugralin B is similar to fugralin A except for a cyclization between the carboxylic acid C-8 and the alcohol on C-4 resulting in a six membered lactone ring, probably catalyzed by the cyclase FGR4. One of the key features of fugralins is the presence of a double methyl group, which is only rarely encountered in fungal secondary metabolites. As the fugralins cluster does not contain an independent methyltransferase, the PKS FGR1 is probably responsible for adding two methyl groups to the same carbon atom. The exact role of the individual cluster genes remains unknown and further work is needed to unravel the biosynthetic pathway. The chain is Probable cyclase FGR4 from Gibberella zeae (strain ATCC MYA-4620 / CBS 123657 / FGSC 9075 / NRRL 31084 / PH-1) (Wheat head blight fungus).